Here is a 413-residue protein sequence, read N- to C-terminus: Probable tRNA pseudouridine synthase D (413 aa).

The active-site Nucleophile is D97. The 204-residue stretch at 167 to 370 folds into the TRUD domain; it reads AAPNYYGYQR…YGTYRRVRLE (204 aa).

Belongs to the pseudouridine synthase TruD family.

The enzyme catalyses uridine(13) in tRNA = pseudouridine(13) in tRNA. Functionally, could be responsible for synthesis of pseudouridine from uracil-13 in transfer RNAs. The protein is Probable tRNA pseudouridine synthase D of Pyrobaculum aerophilum (strain ATCC 51768 / DSM 7523 / JCM 9630 / CIP 104966 / NBRC 100827 / IM2).